Reading from the N-terminus, the 503-residue chain is Transcription termination/antitermination protein NusA (503 aa).

Positions 140 to 206 constitute an S1 motif domain; sequence GELVIGVVKR…RGPQLLVSRT (67 aa). The KH domain occupies 308 to 374; that stretch reads SHTMDIAVNK…FMEKLDVDEE (67 aa).

The protein belongs to the NusA family. Monomer. Binds directly to the core enzyme of the DNA-dependent RNA polymerase and to nascent RNA.

Its subcellular location is the cytoplasm. In terms of biological role, participates in both transcription termination and antitermination. The chain is Transcription termination/antitermination protein NusA from Coxiella burnetii (strain RSA 493 / Nine Mile phase I).